Here is a 315-residue protein sequence, read N- to C-terminus: Probable carboxylesterase 3 (315 aa).

Methionine 1 is modified (N-acetylmethionine). Residues 81–83 carry the Involved in the stabilization of the negatively charged intermediate by the formation of the oxyanion hole motif; sequence HGG. Active-site residues include serine 160, aspartate 258, and histidine 290.

Belongs to the 'GDXG' lipolytic enzyme family. Expressed in flowers and siliques.

The catalysed reaction is a carboxylic ester + H2O = an alcohol + a carboxylate + H(+). In terms of biological role, carboxylesterase acting on esters with varying acyl chain length. The chain is Probable carboxylesterase 3 (CXE3) from Arabidopsis thaliana (Mouse-ear cress).